We begin with the raw amino-acid sequence, 120 residues long: Large ribosomal subunit protein uL18 (120 aa).

Belongs to the universal ribosomal protein uL18 family. Part of the 50S ribosomal subunit; part of the 5S rRNA/L5/L18/L25 subcomplex. Contacts the 5S and 23S rRNAs.

Its function is as follows. This is one of the proteins that bind and probably mediate the attachment of the 5S RNA into the large ribosomal subunit, where it forms part of the central protuberance. The chain is Large ribosomal subunit protein uL18 from Brucella abortus (strain S19).